The chain runs to 469 residues: Protein RUFY3 (469 aa).

Phosphothreonine occurs at positions 5 and 12. Residues Tyr27, Ser34, and Ser49 each carry the phosphoserine modification. Thr51 is subject to Phosphothreonine. Asp53 carries the phosphoserine modification. In terms of domain architecture, RUN spans 95–227; it reads DSDYAPLQQF…IDANFCMKGE (133 aa). Coiled coils occupy residues 271 to 362 and 422 to 463; these read NRHL…VEKE and KSEL…AANK. The span at 321 to 337 shows a compositional bias: basic and acidic residues; sequence SYLLESNRKGPKQDRTA. Residues 321–342 are disordered; the sequence is SYLLESNRKGPKQDRTAEGQAL.

As to quaternary structure, interacts with PAK1. Interacts (via C-terminus) with Ras-related Rab-5 proteins. Interacts (via C-terminus) with Ras-related Rap-2 proteins. Interacts with PIK3CA and PIK3R1. Interacts (via N-terminus) with FSCN1; this interaction induces neuron axon development. Interacts with DBN1. Interacts (via the second coiled coil) with GTP-, but not GDP-bound ARL8A and ARL8B. Interacts with dynactin/DCTN1 and the dynein intermediate chain DYNC1I1/2. Directly interacts with DYNC1LI1. In terms of processing, phosphorylated by PAK1. Isoform 1 is partially phosphorylated. In terms of tissue distribution, expressed in brain (at protein level).

Its subcellular location is the cytoplasm. It is found in the endomembrane system. It localises to the cell projection. The protein localises to the invadopodium. The protein resides in the growth cone. Its subcellular location is the perikaryon. It is found in the filopodium. It localises to the lamellipodium. The protein localises to the lysosome. Its function is as follows. ARL8 effector that promotes the coupling of endolysosomes to dynein-dynactin for retrograde transport along microtubules. Acts by binding both GTP-bound ARL8 and dynein-dynactin. In nonneuronal cells, promotes concentration of endolysosomes in the juxtanuclear area. In hippocampal neurons, drives retrograde transport of endolysosomes from the axon to the soma. Plays a role in the generation of neuronal polarity formation and axon growth. Implicated in the formation of a single axon by developing neurons. May inhibit the formation of additional axons by inhibition of PI3K in minor neuronal processes. Plays a role in the formation of F-actin-enriched protrusive structures at the cell periphery. Plays a role in cytoskeletal organization by regulating the subcellular localization of FSCN1 and DBN1 at axonal growth cones. This Mus musculus (Mouse) protein is Protein RUFY3.